The chain runs to 150 residues: Holo-[acyl-carrier-protein] synthase (150 aa).

The Mg(2+) site is built by D8 and E57.

It belongs to the P-Pant transferase superfamily. AcpS family. Mg(2+) is required as a cofactor.

The protein resides in the cytoplasm. The enzyme catalyses apo-[ACP] + CoA = holo-[ACP] + adenosine 3',5'-bisphosphate + H(+). In terms of biological role, transfers the 4'-phosphopantetheine moiety from coenzyme A to a Ser of acyl-carrier-protein. In Jannaschia sp. (strain CCS1), this protein is Holo-[acyl-carrier-protein] synthase.